A 408-amino-acid polypeptide reads, in one-letter code: Multidrug resistance protein MdtG (408 aa).

A run of 11 helical transmembrane segments spans residues 16–36, 58–78, 92–112, 115–135, 146–166, 173–193, 224–244, 256–276, 290–310, 319–339, and 378–398; these read LIVA…VMPF, IVFS…GGLA, LGMG…QFLI, ALLG…ATQV, TLST…GLLA, PVFF…LFCI, LFVT…ILTL, VAFI…LSAP, ILIT…YVQT, FLLG…LVYN, and AVFL…WNSL.

This sequence belongs to the major facilitator superfamily. DHA1 family. MdtG (TC 2.A.1.2.20) subfamily.

It localises to the cell inner membrane. In terms of biological role, confers resistance to fosfomycin and deoxycholate. This Escherichia coli O81 (strain ED1a) protein is Multidrug resistance protein MdtG.